Consider the following 157-residue polypeptide: Crossover junction endodeoxyribonuclease RuvC (157 aa).

Catalysis depends on residues aspartate 7, glutamate 67, and aspartate 140. Residues aspartate 7, glutamate 67, and aspartate 140 each contribute to the Mg(2+) site.

This sequence belongs to the RuvC family. In terms of assembly, homodimer which binds Holliday junction (HJ) DNA. The HJ becomes 2-fold symmetrical on binding to RuvC with unstacked arms; it has a different conformation from HJ DNA in complex with RuvA. In the full resolvosome a probable DNA-RuvA(4)-RuvB(12)-RuvC(2) complex forms which resolves the HJ. The cofactor is Mg(2+).

It localises to the cytoplasm. The catalysed reaction is Endonucleolytic cleavage at a junction such as a reciprocal single-stranded crossover between two homologous DNA duplexes (Holliday junction).. Functionally, the RuvA-RuvB-RuvC complex processes Holliday junction (HJ) DNA during genetic recombination and DNA repair. Endonuclease that resolves HJ intermediates. Cleaves cruciform DNA by making single-stranded nicks across the HJ at symmetrical positions within the homologous arms, yielding a 5'-phosphate and a 3'-hydroxyl group; requires a central core of homology in the junction. The consensus cleavage sequence is 5'-(A/T)TT(C/G)-3'. Cleavage occurs on the 3'-side of the TT dinucleotide at the point of strand exchange. HJ branch migration catalyzed by RuvA-RuvB allows RuvC to scan DNA until it finds its consensus sequence, where it cleaves and resolves the cruciform DNA. This Rickettsia bellii (strain OSU 85-389) protein is Crossover junction endodeoxyribonuclease RuvC.